The chain runs to 331 residues: Ferredoxin--NADP reductase (331 aa).

7 residues coordinate FAD: Glu-34, Gln-42, Tyr-47, Val-87, Phe-120, Asp-285, and Thr-325.

This sequence belongs to the ferredoxin--NADP reductase type 2 family. Homodimer. Requires FAD as cofactor.

The enzyme catalyses 2 reduced [2Fe-2S]-[ferredoxin] + NADP(+) + H(+) = 2 oxidized [2Fe-2S]-[ferredoxin] + NADPH. The polypeptide is Ferredoxin--NADP reductase (Levilactobacillus brevis (strain ATCC 367 / BCRC 12310 / CIP 105137 / JCM 1170 / LMG 11437 / NCIMB 947 / NCTC 947) (Lactobacillus brevis)).